We begin with the raw amino-acid sequence, 103 residues long: Putative double-stranded DNA mimic protein HD_0986 (103 aa).

The protein belongs to the putative dsDNA mimic protein family.

Functionally, may act as a double-stranded DNA (dsDNA) mimic. Probably regulates the activity of a dsDNA-binding protein. This chain is Putative double-stranded DNA mimic protein HD_0986, found in Haemophilus ducreyi (strain 35000HP / ATCC 700724).